The sequence spans 711 residues: Polyribonucleotide nucleotidyltransferase (711 aa).

Asp-490 and Asp-496 together coordinate Mg(2+). The 60-residue stretch at Pro-556–Ile-615 folds into the KH domain. The S1 motif domain occupies Gly-625 to Lys-693.

This sequence belongs to the polyribonucleotide nucleotidyltransferase family. The cofactor is Mg(2+).

The protein localises to the cytoplasm. The enzyme catalyses RNA(n+1) + phosphate = RNA(n) + a ribonucleoside 5'-diphosphate. Functionally, involved in mRNA degradation. Catalyzes the phosphorolysis of single-stranded polyribonucleotides processively in the 3'- to 5'-direction. The polypeptide is Polyribonucleotide nucleotidyltransferase (Roseobacter denitrificans (strain ATCC 33942 / OCh 114) (Erythrobacter sp. (strain OCh 114))).